The chain runs to 262 residues: ClpXP adapter protein SpxH (262 aa).

This sequence belongs to the SpxH family. In terms of assembly, interacts with Spx.

It localises to the cytoplasm. Adapter protein required for efficient degradation of Spx by ClpXP under non-stress conditions. Interaction with Spx stabilizes Spx and exposes the C-terminus of Spx for recognition and proteolysis by ClpXP. This chain is ClpXP adapter protein SpxH, found in Staphylococcus saprophyticus subsp. saprophyticus (strain ATCC 15305 / DSM 20229 / NCIMB 8711 / NCTC 7292 / S-41).